Reading from the N-terminus, the 364-residue chain is MPRGRCRQQGPRIPIWAAANYANAHPWQQMDKASPGVAYTPLVDPWIERPCCGDTVCVRTTMEQKSTASGTCGGKPAERGPLAGHMPSSRPHRVDFCWVPGSDPGTFDGSPWLLDRFLAQLGDYMSFHFEHYQDNISRVCEILRRLTGRAQAWAAPYLDGDLPLPDDYELFCQDLKEVVQDPNSFAEYHAVVTCPLPLASSQLPVAPQLPVVRQYLARFLEGLALDMGTAPRSLPAAMATPAVSGSNSVSRSALFEQQLTKESTPGPKEPPVLPSSTCSSKPGPVEPASSQPEEAAPTPVPRLSESANPPAQRPDPAHPGGPKPQKTEEEVLETEGDQEVSLGTPQEVVEAPETPGEPPLSPGF.

Positions 66-88 (STASGTCGGKPAERGPLAGHMPS) are disordered. The short motif at 114–128 (LDRFLAQLGDYMSFH) is the BH3 element. Residues 258–364 (QLTKESTPGP…PGEPPLSPGF (107 aa)) form a disordered region. Composition is skewed to pro residues over residues 311–322 (AQRPDPAHPGGP) and 355–364 (PGEPPLSPGF).

In terms of assembly, interacts (via BH3 domain) with VDAC1. Interacts with pro-survival Bcl-2 family members, BCL2, BCL2L1 isoform Bcl-X(L), MCL1, BCL2A1 and BCL2L2. Interacts with BAX and BAK1. Ubiquitously expressed.

Its subcellular location is the mitochondrion. Could induce apoptosis in a BH3 domain-dependent manner. The direct interaction network of Bcl-2 family members may play a key role in modulation RTL10/BOP intrinsic apoptotic signaling activity. The polypeptide is Protein Bop (Homo sapiens (Human)).